The sequence spans 753 residues: Nuclear hormone receptor family member daf-12 (753 aa).

The tract at residues 1-109 (MGTNGGVIAE…PDDGLLDSSE (109 aa)) is disordered. Basic and acidic residues predominate over residues 20–29 (NPDKVEEPVV). The segment covering 30-44 (RRKRVTRRRHRRIHS) has biased composition (basic residues). The segment at residues 115 to 190 (QKTCRVCGDH…VGMKKEWILN (76 aa)) is a DNA-binding region (nuclear receptor). 2 NR C4-type zinc fingers span residues 118 to 138 (CRVC…CESC) and 154 to 173 (CPYS…CQKC). A Nuclear localization signal motif is present at residues 191-206 (EEQLRRRKNSRLNNTG). 3 disordered regions span residues 198-251 (KNSR…TINP), 266-314 (NAMP…GYDP), and 376-410 (GHPM…EKNH). Positions 201–211 (RLNNTGTCNKR) are enriched in polar residues. Over residues 212–227 (SQPGNQQSPQGPNQQP) the composition is skewed to low complexity. Composition is skewed to polar residues over residues 285 to 301 (PVGS…SLTM) and 394 to 410 (MSLS…EKNH). The region spanning 516 to 753 (AELKALDAVR…ELPGEFFKIK (238 aa)) is the NR LBD domain.

This sequence belongs to the nuclear hormone receptor family. Interacts with din-1 isoform d. In terms of tissue distribution, expressed throughout muscles of the pharynx. Expressed in epidermal seam cells, the vulva, head neurons, mature spermatheca, uterus and intestine.

The protein localises to the nucleus. Nuclear receptor which binds directly to response elements in target gene promoters. Activity is modulated by binding of steroid hormone ligands that include dafachronic acids. Regulates expression of genes involved in postembryonic development and the dauer diapause, in response to environmental cues. Inhibits the expression of let-7 family members when bound to corepressor din-1s which is an isoform of din-1. Plays a role in controlling the timing of seam cell development during the larval stages. Has a role in the immune response to bacterial infection, via regulation of let-7 miRNAs. Controls expression of genes that promote the aerobic catabolism of fatty acids for reproductive growth. May be involved in thermotolerance. The protein is Nuclear hormone receptor family member daf-12 of Caenorhabditis elegans.